A 340-amino-acid polypeptide reads, in one-letter code: Flavonoid 7-O-methyltransferase 2 (340 aa).

Aspartate 207 provides a ligand contact to S-adenosyl-L-methionine. The active-site Proton acceptor is the histidine 245.

Belongs to the class I-like SAM-binding methyltransferase superfamily. Cation-independent O-methyltransferase family. As to quaternary structure, homodimer. In terms of tissue distribution, expressed in leaves.

It carries out the reaction scutellarein 4'-methyl ether + S-adenosyl-L-methionine = ladanein + S-adenosyl-L-homocysteine. It catalyses the reaction acacetin + S-adenosyl-L-methionine = apigenin 4',7-dimethyl ether + S-adenosyl-L-homocysteine. The catalysed reaction is diosmetin + S-adenosyl-L-methionine = luteolin 4',7-dimethyl ether + S-adenosyl-L-homocysteine. The enzyme catalyses chrysoeriol + S-adenosyl-L-methionine = velutin + S-adenosyl-L-homocysteine. It carries out the reaction (2S)-naringenin + S-adenosyl-L-methionine = (2S)-sakuranetin + S-adenosyl-L-homocysteine + H(+). It catalyses the reaction apigenin + S-adenosyl-L-methionine = genkwanin + S-adenosyl-L-homocysteine + H(+). The catalysed reaction is luteolin + S-adenosyl-L-methionine = luteolin 7-methyl ether + S-adenosyl-L-homocysteine + H(+). The enzyme catalyses scutellarein + S-adenosyl-L-methionine = scutellarein 7-methyl ether + S-adenosyl-L-homocysteine. It functions in the pathway flavonoid metabolism. In terms of biological role, flavonoid 7-O-methyltransferase involved in the biosynthesis of polymethoxylated flavonoids natural products such as nevadensin and salvigenin, aroma compounds which contribute to the flavor of sweet basil, and exhibit pharmacological activities such as anti-allergic, anti-oxidant, antibacterial, anti-proliferative, and anti-inflammatory effects. Catalyzes S-adenosylmethionine-dependent regioselective 7-O-methylation of flavonoids; active on various hydroxylated flavonoid substrates, including apigenin (API) and luteolin (LUT), and, with a lower efficiency, scutellarein (SCU), naringenin (NAR), chrysoeriol (CHRYS), diosmetin (DIOS), acacetin (ACA) and scutellarein-7-methyl ether (SCU7Me). The chain is Flavonoid 7-O-methyltransferase 2 from Ocimum basilicum (Sweet basil).